We begin with the raw amino-acid sequence, 326 residues long: Phospho-N-acetylmuramoyl-pentapeptide-transferase (326 aa).

The next 9 helical transmembrane spans lie at 3-23 (ISIS…PAFI), 51-71 (TMGG…FALF), 79-99 (VGMI…DDFL), 115-135 (LALQ…GGDI), 138-158 (VFGY…FWLV), 169-189 (GVDG…GVIA), 195-215 (MDIL…FIFN), 221-243 (VFMG…MALH), and 306-326 (FFFW…LYLM).

The protein belongs to the glycosyltransferase 4 family. MraY subfamily. Mg(2+) serves as cofactor.

The protein localises to the cell membrane. The enzyme catalyses UDP-N-acetyl-alpha-D-muramoyl-L-alanyl-gamma-D-glutamyl-L-lysyl-D-alanyl-D-alanine + di-trans,octa-cis-undecaprenyl phosphate = Mur2Ac(oyl-L-Ala-gamma-D-Glu-L-Lys-D-Ala-D-Ala)-di-trans,octa-cis-undecaprenyl diphosphate + UMP. The protein operates within cell wall biogenesis; peptidoglycan biosynthesis. Its function is as follows. Catalyzes the initial step of the lipid cycle reactions in the biosynthesis of the cell wall peptidoglycan: transfers peptidoglycan precursor phospho-MurNAc-pentapeptide from UDP-MurNAc-pentapeptide onto the lipid carrier undecaprenyl phosphate, yielding undecaprenyl-pyrophosphoryl-MurNAc-pentapeptide, known as lipid I. The polypeptide is Phospho-N-acetylmuramoyl-pentapeptide-transferase (Streptococcus pneumoniae (strain 70585)).